The following is a 464-amino-acid chain: Cytochrome P450 85A1 (464 aa).

A helical transmembrane segment spans residues 2–22; that stretch reads AFFLIFLSSFFGLCIFCTALL. Position 414 (Cys-414) interacts with heme.

It belongs to the cytochrome P450 family. It depends on heme as a cofactor. Expressed in sub-meristematic regions of shoot and root apexes, in zones undergoing lateral root formation, in fruits, and in all flower parts, with a high expression in young flower buds and at the joint in the pedicel.

It is found in the membrane. The catalysed reaction is 6-deoxocastasterone + reduced [NADPH--hemoprotein reductase] + O2 = 6alpha-hydroxycastasterone + oxidized [NADPH--hemoprotein reductase] + H2O + H(+). The enzyme catalyses 6alpha-hydroxycastasterone + reduced [NADPH--hemoprotein reductase] + O2 = castasterone + oxidized [NADPH--hemoprotein reductase] + 2 H2O + H(+). It catalyses the reaction 6-deoxocastasterone + 2 reduced [NADPH--hemoprotein reductase] + 2 O2 = castasterone + 2 oxidized [NADPH--hemoprotein reductase] + 3 H2O + 2 H(+). The protein operates within plant hormone biosynthesis; brassinosteroid biosynthesis. Catalyzes the C6-oxidation step in brassinosteroids biosynthesis. Converts 6-deoxocastasterone (6-deoxoCS) to castasterone (CS). May also convert 6-deoxoteasterone (6-deoxoTE) to teasterone (TE), 3-dehydro-6-deoxoteasterone (6-deoxo3DT, 6-deoxo3DHT) to 3-dehydroteasterone (3DT, 3-DHT), and 6-deoxotyphasterol (6-deoxoTY) to typhasterol (TY), but not castasterone (CS) to brassinolide (BL). The sequence is that of Cytochrome P450 85A1 from Solanum lycopersicum (Tomato).